The primary structure comprises 182 residues: ATP synthase subunit b 1 (182 aa).

A helical transmembrane segment spans residues 24–44 (FADPAFWVSIAFLMVVGFVYI).

This sequence belongs to the ATPase B chain family. In terms of assembly, F-type ATPases have 2 components, F(1) - the catalytic core - and F(0) - the membrane proton channel. F(1) has five subunits: alpha(3), beta(3), gamma(1), delta(1), epsilon(1). F(0) has three main subunits: a(1), b(2) and c(10-14). The alpha and beta chains form an alternating ring which encloses part of the gamma chain. F(1) is attached to F(0) by a central stalk formed by the gamma and epsilon chains, while a peripheral stalk is formed by the delta and b chains.

It is found in the cell inner membrane. In terms of biological role, f(1)F(0) ATP synthase produces ATP from ADP in the presence of a proton or sodium gradient. F-type ATPases consist of two structural domains, F(1) containing the extramembraneous catalytic core and F(0) containing the membrane proton channel, linked together by a central stalk and a peripheral stalk. During catalysis, ATP synthesis in the catalytic domain of F(1) is coupled via a rotary mechanism of the central stalk subunits to proton translocation. Its function is as follows. Component of the F(0) channel, it forms part of the peripheral stalk, linking F(1) to F(0). In Rhodospirillum rubrum (strain ATCC 11170 / ATH 1.1.1 / DSM 467 / LMG 4362 / NCIMB 8255 / S1), this protein is ATP synthase subunit b 1.